Consider the following 304-residue polypeptide: Beta-lactamase-like protein str6 (304 aa).

Belongs to the beta-lactamase family.

It participates in mycotoxin biosynthesis. Its function is as follows. Beta-lactamase-like protein; part of the gene cluster that mediates the biosynthesis of strobilurin A, an antifungal polyketide that contains a key beta-methoxyacrylate toxophore that targets the complex III of the mitochondrial electron transport chain. Strobilurin biosynthesis begins with construction of benzoyl CoA by step-wise elimination of ammonia from phenylalanine by the phenylalanine ammonia-lyase str11, oxygenation by str8 and retro-Claisen reaction to form benzoic acid, which is activated to its CoA thiolester benzoyl CoA by the dedicated CoA ligase str10. Benzoyl CoA forms the starter unit for the highly reducing polyketide synthase stpks1 that produces the polyketide prestrobilutin A. The FAD-dependent oxygenase str9 then catalyzes the key oxidative rearrangement responsible for the creation of the beta-methoxyacrylate toxophore. Str9 performs epoxidation of the 2,3 olefin of prestrobilutin A, followed by Meinwald rearrangement to furnish the aldehyde intermediate. Rapid enolization of the aldehyde intermediate would give the beta-methoxyacrylate skeleton and methylations catalyzed by str2 and str3 complete the synthesis and lead to the production of strobilurin A. The short-chain dehydrogenase stl2 and the dehydrogenase str4 play a role in the shunt pathway leading to the production of bolineol. The cluster encodes no obvious halogenase gene that could be involved in production of strobilurin B, nor any obvious dimethylallyl-transferase that could be involved in the production of strobilurin G. It is possible that unknown proteins encoded in, or near, the cluster (such as str1 or stl1) may form new classes of halogenases or dimethylally-transferases, or that the responsible genes are located elsewhere on the genome. Similarly, proteins encoded by str5/str6 hydrolases appear to have no chemical role in the biosynthesis of strobilurin A. Finally, no obvious self-resistance gene is found within the cluster. The sequence is that of Beta-lactamase-like protein str6 from Strobilurus tenacellus.